A 131-amino-acid polypeptide reads, in one-letter code: Flagellar assembly factor FliW (131 aa).

Belongs to the FliW family. In terms of assembly, interacts with translational regulator CsrA and flagellin(s).

It is found in the cytoplasm. In terms of biological role, acts as an anti-CsrA protein, binds CsrA and prevents it from repressing translation of its target genes, one of which is flagellin. Binds to flagellin and participates in the assembly of the flagellum. The polypeptide is Flagellar assembly factor FliW (Campylobacter lari (strain RM2100 / D67 / ATCC BAA-1060)).